The sequence spans 322 residues: Gluconeogenesis factor (322 aa).

This sequence belongs to the gluconeogenesis factor family.

It localises to the cytoplasm. Required for morphogenesis under gluconeogenic growth conditions. The polypeptide is Gluconeogenesis factor (Listeria monocytogenes serovar 1/2a (strain ATCC BAA-679 / EGD-e)).